We begin with the raw amino-acid sequence, 638 residues long: uncharacterized protein (638 aa).

A CID domain is found at 1-138 (MDLVELDYLS…KIENALLKYK (138 aa)). Disordered stretches follow at residues 318-338 (QPPL…YSLS) and 615-638 (LGKR…QESK).

This is an uncharacterized protein from Schizosaccharomyces pombe (strain 972 / ATCC 24843) (Fission yeast).